The sequence spans 81 residues: ATP synthase subunit c (81 aa).

The next 2 helical transmembrane spans lie at 4 to 24 and 57 to 77; these read MIAQGALIGGGLIMAGGAIGA and VGLVEAAYFINLAFMALFVFA.

It belongs to the ATPase C chain family. F-type ATPases have 2 components, F(1) - the catalytic core - and F(0) - the membrane proton channel. F(1) has five subunits: alpha(3), beta(3), gamma(1), delta(1), epsilon(1). F(0) has three main subunits: a(1), b(2) and c(10-14). The alpha and beta chains form an alternating ring which encloses part of the gamma chain. F(1) is attached to F(0) by a central stalk formed by the gamma and epsilon chains, while a peripheral stalk is formed by the delta and b chains.

It localises to the cell membrane. Functionally, f(1)F(0) ATP synthase produces ATP from ADP in the presence of a proton or sodium gradient. F-type ATPases consist of two structural domains, F(1) containing the extramembraneous catalytic core and F(0) containing the membrane proton channel, linked together by a central stalk and a peripheral stalk. During catalysis, ATP synthesis in the catalytic domain of F(1) is coupled via a rotary mechanism of the central stalk subunits to proton translocation. In terms of biological role, key component of the F(0) channel; it plays a direct role in translocation across the membrane. A homomeric c-ring of between 10-14 subunits forms the central stalk rotor element with the F(1) delta and epsilon subunits. The protein is ATP synthase subunit c of Mycobacterium leprae (strain TN).